A 1374-amino-acid chain; its full sequence is Ribonuclease 3 (1374 aa).

Disordered stretches follow at residues 1 to 95, 130 to 406, and 452 to 497; these read MMQG…PLPP, PPVP…EEEE, and LGSR…SSSS. Over residues 59 to 68 the composition is skewed to polar residues; it reads PSTTFSNSPA. Composition is skewed to pro residues over residues 70–95 and 145–160; these read NFLPPRPDFVPFPPPMPPSAQGPLPP and MMPPPSMPHPPPPPVM. Positions 182–202 are enriched in low complexity; that stretch reads FNSFQNNPSSFLPSANNSSSP. 2 stretches are compositionally biased toward basic and acidic residues: residues 216-289 and 298-313; these read PSER…ERER and RRSPSLERSYKKEYKR. A phosphoserine mark is found at Ser-355 and Ser-373. A compositionally biased stretch (basic and acidic residues) spans 364 to 399; it reads RWEEEKDRWSDNQSSGKDKNYTSIKEKEPEETMPDK. The necessary for interaction with DGCR8 and pri-miRNA processing activity stretch occupies residues 390–1365; that stretch reads KEPEETMPDK…RWEREHQERE (976 aa). Residues 475–491 are compositionally biased toward acidic residues; the sequence is EDLESSSESECESDEDS. Cys-536, Cys-538, His-549, Cys-561, His-609, Cys-676, and His-680 together coordinate Zn(2+). RNase III domains follow at residues 876–1056 and 1107–1233; these read LMHL…LEGS and LTEF…IDKD. Glu-969 provides a ligand contact to Mg(2+). Zn(2+) is bound at residue His-1026. Mg(2+) is bound by residues Asn-1042, Glu-1045, Glu-1147, Asp-1219, and Glu-1222. The region spanning 1260 to 1334 is the DRBM domain; sequence DPKSQLQQCC…AMDALEKYNF (75 aa).

This sequence belongs to the ribonuclease III family. Component of the microprocessor complex, or pri-miRNA processing protein complex, which is composed of DROSHA and DGCR8. The microprocessor complex is a heterotrimer; each of the two DROSHA RNase III domains binds one DGCR8 (via C-terminal region). Interacts with SP1 and SNIP1. Interacts with SRRT/ARS2. Interacts with CPSF3 and ISY1; this interaction is in an RNA dependent manner. Interacts with PUS10; interaction promotes pri-miRNAs processing. It depends on Mg(2+) as a cofactor. The cofactor is Mn(2+). Post-translationally, degraded by autophagy in response to neuronal activity in motor neurons. As to expression, ubiquitous.

It is found in the nucleus. The protein resides in the nucleolus. It localises to the cytoplasm. The catalysed reaction is Endonucleolytic cleavage to 5'-phosphomonoester.. In terms of biological role, ribonuclease III double-stranded (ds) RNA-specific endoribonuclease that is involved in the initial step of microRNA (miRNA) biogenesis. Component of the microprocessor complex that is required to process primary miRNA transcripts (pri-miRNAs) to release precursor miRNA (pre-miRNA) in the nucleus. Within the microprocessor complex, DROSHA cleaves the 3' and 5' strands of a stem-loop in pri-miRNAs (processing center 11 bp from the dsRNA-ssRNA junction) to release hairpin-shaped pre-miRNAs that are subsequently cut by the cytoplasmic DICER to generate mature miRNAs. Involved also in pre-rRNA processing. Cleaves double-strand RNA and does not cleave single-strand RNA. Involved in the formation of GW bodies. Plays a role in growth homeostasis in response to autophagy in motor neurons. The chain is Ribonuclease 3 (DROSHA) from Homo sapiens (Human).